The sequence spans 1534 residues: MALTPGWGSSAGPVRPELWLLLWAAAWRLGASACPALCTCTGTTVDCHGTGLQAIPKNIPRNTERLELNGNNITRIHKNDFAGLKQLRVLQLMENQIGAVERGAFDDMKELERLRLNRNQLHMLPELLFQNNQALSRLDLSENAIQAIPRKAFRGATDLKNLQLDKNQISCIEEGAFRALRGLEVLTLNNNNITTIPVSSFNHMPKLRTFRLHSNHLFCDCHLAWLSQWLRQRPTIGLFTQCSGPASLRGLNVAEVQKSEFSCSGQGEAGRVPTCTLSSGSCPAMCTCSNGIVDCRGKGLTAIPANLPETMTEIRLELNGIKSIPPGAFSPYRKLRRIDLSNNQIAEIAPDAFQGLRSLNSLVLYGNKITDLPRGVFGGLYTLQLLLLNANKINCIRPDAFQDLQNLSLLSLYDNKIQSLAKGTFTSLRAIQTLHLAQNPFICDCNLKWLADFLRTNPIETSGARCASPRRLANKRIGQIKSKKFRCSAKEQYFIPGTEDYQLNSECNSDVVCPHKCRCEANVVECSSLKLTKIPERIPQSTAELRLNNNEISILEATGMFKKLTHLKKINLSNNKVSEIEDGAFEGAASVSELHLTANQLESIRSGMFRGLDGLRTLMLRNNRISCIHNDSFTGLRNVRLLSLYDNQITTVSPGAFDTLQSLSTLNLLANPFNCNCQLAWLGGWLRKRKIVTGNPRCQNPDFLRQIPLQDVAFPDFRCEEGQEEGGCLPRPQCPQECACLDTVVRCSNKHLRALPKGIPKNVTELYLDGNQFTLVPGQLSTFKYLQLVDLSNNKISSLSNSSFTNMSQLTTLILSYNALQCIPPLAFQGLRSLRLLSLHGNDISTLQEGIFADVTSLSHLAIGANPLYCDCHLRWLSSWVKTGYKEPGIARCAGPQDMEGKLLLTTPAKKFECQGPPTLAVQAKCDLCLSSPCQNQGTCHNDPLEVYRCACPSGYKGRDCEVSLDSCSSGPCENGGTCHAQEGEDAPFTCSCPTGFEGPTCGVNTDDCVDHACANGGVCVDGVGNYTCQCPLQYEGKACEQLVDLCSPDLNPCQHEAQCVGTPDGPRCECMPGYAGDNCSENQDDCRDHRCQNGAQCMDEVNSYSCLCAEGYSGQLCEIPPHLPAPKSPCEGTECQNGANCVDQGNRPVCQCLPGFGGPECEKLLSVNFVDRDTYLQFTDLQNWPRANITLQVSTAEDNGILLYNGDNDHIAVELYQGHVRVSYDPGSYPSSAIYSAETINDGQFHTVELVAFDQMVNLSIDGGSPMTMDNFGKHYTLNSEAPLYVGGMPVDVNSAAFRLWQILNGTGFHGCIRNLYINNELQDFTKTQMKPGVVPGCEPCRKLYCLHGICQPNATPGPMCHCEAGWVGLHCDQPADGPCHGHKCVHGQCVPLDALSYSCQCQDGYSGALCNQAGALAEPCRGLQCLHGHCQASGTKGAHCVCDPGFSGELCEQESECRGDPVRDFHQVQRGYAICQTTRPLSWVECRGSCPGQGCCQGLRLKRRKFTFECSDGTSFAEEVEKPTKCGCALCA.

The signal sequence occupies residues 1–33 (MALTPGWGSSAGPVRPELWLLLWAAAWRLGASA). One can recognise an LRRNT domain in the interval 34–61 (CPALCTCTGTTVDCHGTGLQAIPKNIPR). LRR repeat units lie at residues 62-83 (NTER…DFAG), 86-107 (QLRV…AFDD), 110-131 (ELER…LFQN), 134-155 (ALSR…AFRG), 158-179 (DLKN…AFRA), and 182-203 (GLEV…SFNH). N-linked (GlcNAc...) asparagine glycosylation is present at N72. N192 carries N-linked (GlcNAc...) asparagine glycosylation. Residues 215–265 (NHLFCDCHLAWLSQWLRQRPTIGLFTQCSGPASLRGLNVAEVQKSEFSCSG) enclose the LRRCT 1 domain. The LRRNT 2 domain occupies 273–309 (PTCTLSSGSCPAMCTCSNGIVDCRGKGLTAIPANLPE). A disulfide bridge links C286 with C295. 5 LRR repeats span residues 310–331 (TMTE…AFSP), 334–355 (KLRR…AFQG), 358–379 (SLNS…VFGG), 382–403 (TLQL…AFQD), and 406–427 (NLSL…TFTS). An N-linked (GlcNAc...) asparagine glycan is attached at N406. One can recognise an LRRCT 2 domain in the interval 439–489 (NPFICDCNLKWLADFLRTNPIETSGARCASPRRLANKRIGQIKSKKFRCSA). Intrachain disulfides connect C443–C466, C445–C487, C513–C519, and C517–C526. Positions 504 to 540 (NSECNSDVVCPHKCRCEANVVECSSLKLTKIPERIPQ) constitute an LRRNT 3 domain. 5 LRR repeats span residues 541–562 (STAE…GMFK), 566–587 (HLKK…AFEG), 590–611 (SVSE…MFRG), 614–635 (GLRT…SFTG), and 638–659 (NVRL…AFDT). The N-linked (GlcNAc...) asparagine glycan is linked to N571. The N-linked (GlcNAc...) asparagine glycan is linked to N630. An LRRCT 3 domain is found at 671 to 721 (NPFNCNCQLAWLGGWLRKRKIVTGNPRCQNPDFLRQIPLQDVAFPDFRCEE). Cystine bridges form between C675–C698 and C677–C719. The 37-residue stretch at 725-761 (EGGCLPRPQCPQECACLDTVVRCSNKHLRALPKGIPK) folds into the LRRNT 4 domain. N-linked (GlcNAc...) asparagine glycans are attached at residues N762, N801, and N806. LRR repeat units follow at residues 762–783 (NVTE…LSTF), 785–806 (YLQL…SFTN), 809–830 (QLTT…AFQG), and 833–854 (SLRL…IFAD). Residues 866 to 916 (NPLYCDCHLRWLSSWVKTGYKEPGIARCAGPQDMEGKLLLTTPAKKFECQG) form the LRRCT 4 domain. 6 consecutive EGF-like domains span residues 927–962 (DLCL…RDCE), 964–1003 (SLDS…PTCG), 1005–1041 (NTDD…KACE), 1043–1081 (LVDL…DNCS), 1083–1119 (NQDD…QLCE), and 1127–1163 (PKSP…PECE). Disulfide bonds link C929–C940, C934–C950, C952–C961, C968–C979, C973–C991, C993–C1002, C1009–C1020, C1014–C1029, C1031–C1040, C1047–C1060, C1054–C1069, C1071–C1080, C1087–C1098, C1092–C1107, C1109–C1118, C1131–C1142, C1136–C1151, and C1153–C1162. N-linked (GlcNAc...) asparagine glycosylation occurs at N1026. A glycan (N-linked (GlcNAc...) asparagine) is linked at N1079. The 174-residue stretch at 1166 to 1339 (LSVNFVDRDT…QMKPGVVPGC (174 aa)) folds into the Laminin G-like domain. 3 N-linked (GlcNAc...) asparagine glycosylation sites follow: N1189, N1259, and N1306. 14 disulfide bridges follow: C1313/C1339, C1342/C1352, C1347/C1362, C1364/C1373, C1381/C1391, C1386/C1401, C1403/C1412, C1422/C1432, C1427/C1442, C1444/C1453, C1459/C1498, C1477/C1512, C1488/C1528, and C1492/C1530. EGF-like domains follow at residues 1340-1374 (EPCR…LHCD), 1377-1413 (ADGP…ALCN), and 1418-1454 (LAEP…ELCE). Residues 1459–1534 (CRGDPVRDFH…PTKCGCALCA (76 aa)) enclose the CTCK domain.

In terms of assembly, interacts with ROBO1 and GREM1. As to expression, predominantly expressed in adult forebrain. Expressed in fetal brain, lung and kidney.

Its subcellular location is the secreted. Its function is as follows. Thought to act as molecular guidance cue in cellular migration, and function appears to be mediated by interaction with roundabout homolog receptors. During neural development involved in axonal navigation at the ventral midline of the neural tube and projection of axons to different regions. SLIT1 and SLIT2 together seem to be essential for midline guidance in the forebrain by acting as repulsive signal preventing inappropriate midline crossing by axons projecting from the olfactory bulb. The chain is Slit homolog 1 protein (SLIT1) from Homo sapiens (Human).